The following is a 20-amino-acid chain: Large ribosomal subunit protein bL31 (20 aa).

Zn(2+) contacts are provided by residue 16 and residue 18.

It belongs to the bacterial ribosomal protein bL31 family. Type A subfamily. As to quaternary structure, part of the 50S ribosomal subunit. Zn(2+) is required as a cofactor.

Functionally, binds the 23S rRNA. The chain is Large ribosomal subunit protein bL31 (rpmE) from Ectopseudomonas mendocina (Pseudomonas mendocina).